Reading from the N-terminus, the 218-residue chain is Urease accessory protein UreG (218 aa).

Residue 22 to 29 (GPVGSGKT) participates in GTP binding.

Belongs to the SIMIBI class G3E GTPase family. UreG subfamily. In terms of assembly, homodimer. UreD, UreF and UreG form a complex that acts as a GTP-hydrolysis-dependent molecular chaperone, activating the urease apoprotein by helping to assemble the nickel containing metallocenter of UreC. The UreE protein probably delivers the nickel.

The protein resides in the cytoplasm. Facilitates the functional incorporation of the urease nickel metallocenter. This process requires GTP hydrolysis, probably effectuated by UreG. The polypeptide is Urease accessory protein UreG (Polaromonas sp. (strain JS666 / ATCC BAA-500)).